A 204-amino-acid polypeptide reads, in one-letter code: UPF0215 protein MTH_1316 (204 aa).

Belongs to the UPF0215 family.

This chain is UPF0215 protein MTH_1316, found in Methanothermobacter thermautotrophicus (strain ATCC 29096 / DSM 1053 / JCM 10044 / NBRC 100330 / Delta H) (Methanobacterium thermoautotrophicum).